A 184-amino-acid polypeptide reads, in one-letter code: Jacalin-related lectin 2 (184 aa).

Positions Lys4 to Pro163 constitute a Jacalin-type lectin domain.

This sequence belongs to the jacalin lectin family.

This chain is Jacalin-related lectin 2 (JAL2), found in Arabidopsis thaliana (Mouse-ear cress).